Consider the following 292-residue polypeptide: Elongation factor Ts (292 aa).

An involved in Mg(2+) ion dislocation from EF-Tu region spans residues 82-85 (TDFV).

The protein belongs to the EF-Ts family.

Its subcellular location is the cytoplasm. Its function is as follows. Associates with the EF-Tu.GDP complex and induces the exchange of GDP to GTP. It remains bound to the aminoacyl-tRNA.EF-Tu.GTP complex up to the GTP hydrolysis stage on the ribosome. The chain is Elongation factor Ts from Bordetella petrii (strain ATCC BAA-461 / DSM 12804 / CCUG 43448).